Here is a 346-residue protein sequence, read N- to C-terminus: NADH-ubiquinone oxidoreductase chain 2 (346 aa).

Transmembrane regions (helical) follow at residues 1 to 21 (MNPH…TITI), 25 to 45 (HWVL…PLIS), 60 to 80 (FLTQ…NAWA), 95 to 115 (CLLL…HFWF), 124 to 144 (LMTA…LLLM), 149 to 169 (LNPA…GWMG), 178 to 195 (ILAF…IILV), 200 to 219 (LALL…FMAL), 242 to 262 (ATLM…GFMP), 274 to 294 (EMTP…FFYL), and 326 to 346 (AILA…HAIV).

Belongs to the complex I subunit 2 family.

Its subcellular location is the mitochondrion inner membrane. The catalysed reaction is a ubiquinone + NADH + 5 H(+)(in) = a ubiquinol + NAD(+) + 4 H(+)(out). Core subunit of the mitochondrial membrane respiratory chain NADH dehydrogenase (Complex I) that is believed to belong to the minimal assembly required for catalysis. Complex I functions in the transfer of electrons from NADH to the respiratory chain. The immediate electron acceptor for the enzyme is believed to be ubiquinone. This is NADH-ubiquinone oxidoreductase chain 2 (MT-ND2) from Anas acuta (Northern pintail).